Consider the following 538-residue polypeptide: Casein kinase I homolog 1 (538 aa).

A disordered region spans residues 39–61 (SPARSSMTATTAANSNSNSSRDD). The span at 41 to 57 (ARSSMTATTAANSNSNS) shows a compositional bias: low complexity. In terms of domain architecture, Protein kinase spans 69–353 (YKIGKKIGEG…ETADGQYDWM (285 aa)). Residues 75-83 (IGEGSFGVL) and Lys-98 contribute to the ATP site. Catalysis depends on Asp-188, which acts as the Proton acceptor. Disordered regions lie at residues 366-428 (NKKP…KPKL) and 474-527 (QQQL…LAAS). Low complexity-rich tracts occupy residues 391–410 (QLQM…QQQQ) and 474–498 (QQQL…QFGA). 3 positions are modified to phosphoserine: Ser-522, Ser-523, and Ser-527. Residues Cys-537 and Cys-538 are each lipidated (S-palmitoyl cysteine).

It belongs to the protein kinase superfamily. CK1 Ser/Thr protein kinase family. Casein kinase I subfamily. Palmitoylated by AKR1.

The protein localises to the cell membrane. The protein resides in the mitochondrion membrane. The catalysed reaction is L-seryl-[protein] + ATP = O-phospho-L-seryl-[protein] + ADP + H(+). The enzyme catalyses L-threonyl-[protein] + ATP = O-phospho-L-threonyl-[protein] + ADP + H(+). Its function is as follows. Casein kinases are operationally defined by their preferential utilization of acidic proteins such as caseins as substrates. The polypeptide is Casein kinase I homolog 1 (YCK1) (Saccharomyces cerevisiae (strain ATCC 204508 / S288c) (Baker's yeast)).